A 90-amino-acid polypeptide reads, in one-letter code: Phosphoribosyl-ATP pyrophosphatase (90 aa).

It belongs to the PRA-PH family.

The protein resides in the cytoplasm. It catalyses the reaction 1-(5-phospho-beta-D-ribosyl)-ATP + H2O = 1-(5-phospho-beta-D-ribosyl)-5'-AMP + diphosphate + H(+). It functions in the pathway amino-acid biosynthesis; L-histidine biosynthesis; L-histidine from 5-phospho-alpha-D-ribose 1-diphosphate: step 2/9. The polypeptide is Phosphoribosyl-ATP pyrophosphatase (Streptomyces avermitilis (strain ATCC 31267 / DSM 46492 / JCM 5070 / NBRC 14893 / NCIMB 12804 / NRRL 8165 / MA-4680)).